A 301-amino-acid polypeptide reads, in one-letter code: tRNA dimethylallyltransferase (301 aa).

8–15 (GPTAVGKT) is a binding site for ATP. A substrate-binding site is contributed by 10–15 (TAVGKT). The segment at 33-36 (DSRQ) is interaction with substrate tRNA.

Belongs to the IPP transferase family. Monomer. The cofactor is Mg(2+).

The enzyme catalyses adenosine(37) in tRNA + dimethylallyl diphosphate = N(6)-dimethylallyladenosine(37) in tRNA + diphosphate. Functionally, catalyzes the transfer of a dimethylallyl group onto the adenine at position 37 in tRNAs that read codons beginning with uridine, leading to the formation of N6-(dimethylallyl)adenosine (i(6)A). This is tRNA dimethylallyltransferase from Thermosipho melanesiensis (strain DSM 12029 / CIP 104789 / BI429).